A 185-amino-acid chain; its full sequence is MIENIKKDAQERMGKCVDATKNQMAKVRTGRAHPSLLDSIQVSYYGTMTPLNQVANVGVEDSRTLSVTVFDRSAIQAVEKAIMSSDLGLNPMSAGATLRIPLPALTEERRKDFIKVVRAEAEGGRVAIRNVRRDAISEVKKLEKAKECTEDDVRRFEDDVQKFTDAHIKKVDEILAAKEIELMEV.

Belongs to the RRF family.

It is found in the cytoplasm. Responsible for the release of ribosomes from messenger RNA at the termination of protein biosynthesis. May increase the efficiency of translation by recycling ribosomes from one round of translation to another. The sequence is that of Ribosome-recycling factor from Shewanella sp. (strain W3-18-1).